Consider the following 122-residue polypeptide: Large ribosomal subunit protein bL12 (122 aa).

Belongs to the bacterial ribosomal protein bL12 family. As to quaternary structure, homodimer. Part of the ribosomal stalk of the 50S ribosomal subunit. Forms a multimeric L10(L12)X complex, where L10 forms an elongated spine to which 2 to 4 L12 dimers bind in a sequential fashion. Binds GTP-bound translation factors.

Functionally, forms part of the ribosomal stalk which helps the ribosome interact with GTP-bound translation factors. Is thus essential for accurate translation. The protein is Large ribosomal subunit protein bL12 of Lacticaseibacillus casei (strain BL23) (Lactobacillus casei).